The chain runs to 626 residues: Transketolase-like protein 2 (626 aa).

His37 is a substrate binding site. Residues Ser40, His77, and Gly123–Leu125 each bind thiamine diphosphate. Asp155 is a Mg(2+) binding site. Residues Gly156 and Asn185 each coordinate thiamine diphosphate. Asn185 and Leu187 together coordinate Mg(2+). Residues Lys247 and His261 each contribute to the thiamine diphosphate site. The substrate site is built by His261 and Ser348. Residues Glu369 and Phe395 each coordinate thiamine diphosphate. Glu369 serves as the catalytic Proton donor. Residues His419 and Asp427 each coordinate substrate. Gln431 provides a ligand contact to thiamine diphosphate. Arg477 is a binding site for substrate.

The protein belongs to the transketolase family. As to quaternary structure, homodimer. Requires Mg(2+) as cofactor. The cofactor is Ca(2+). It depends on Mn(2+) as a cofactor. Co(2+) is required as a cofactor. Thiamine diphosphate serves as cofactor.

It carries out the reaction D-sedoheptulose 7-phosphate + D-glyceraldehyde 3-phosphate = aldehydo-D-ribose 5-phosphate + D-xylulose 5-phosphate. Its function is as follows. Plays an essential role in total transketolase activity and cell proliferation in cancer cells; after transfection with anti-TKTL1 siRNA, total transketolase activity dramatically decreases and proliferation was significantly inhibited in cancer cells. Plays a pivotal role in carcinogenesis. The protein is Transketolase-like protein 2 (TKTL2) of Bos taurus (Bovine).